Consider the following 662-residue polypeptide: UvrABC system protein B (662 aa).

The 158-residue stretch at 25–182 (KGIEKREKFQ…KKLVEIQYER (158 aa)) folds into the Helicase ATP-binding domain. 38 to 45 (GVTGSGKT) provides a ligand contact to ATP. A Beta-hairpin motif is present at residues 91 to 114 (YYDYYQPEAYVAQSDTYIEKDASI). One can recognise a Helicase C-terminal domain in the interval 429-595 (QIDDLYTSIQ…TIIKDIREVI (167 aa)). One can recognise a UVR domain in the interval 622–657 (DKLIEKYEEEMKEAAQNLQFEKAAHLRDVIYKLKKD).

It belongs to the UvrB family. Forms a heterotetramer with UvrA during the search for lesions. Interacts with UvrC in an incision complex.

The protein resides in the cytoplasm. Functionally, the UvrABC repair system catalyzes the recognition and processing of DNA lesions. A damage recognition complex composed of 2 UvrA and 2 UvrB subunits scans DNA for abnormalities. Upon binding of the UvrA(2)B(2) complex to a putative damaged site, the DNA wraps around one UvrB monomer. DNA wrap is dependent on ATP binding by UvrB and probably causes local melting of the DNA helix, facilitating insertion of UvrB beta-hairpin between the DNA strands. Then UvrB probes one DNA strand for the presence of a lesion. If a lesion is found the UvrA subunits dissociate and the UvrB-DNA preincision complex is formed. This complex is subsequently bound by UvrC and the second UvrB is released. If no lesion is found, the DNA wraps around the other UvrB subunit that will check the other stand for damage. This chain is UvrABC system protein B, found in Clostridium botulinum (strain Langeland / NCTC 10281 / Type F).